The chain runs to 511 residues: Light-independent protochlorophyllide reductase subunit B (511 aa).

Aspartate 36 lines the [4Fe-4S] cluster pocket. Residue aspartate 299 is the Proton donor of the active site. Residue 434–435 coordinates substrate; sequence GM.

This sequence belongs to the ChlB/BchB/BchZ family. As to quaternary structure, protochlorophyllide reductase is composed of three subunits; ChlL, ChlN and ChlB. Forms a heterotetramer of two ChlB and two ChlN subunits. Requires [4Fe-4S] cluster as cofactor.

The protein resides in the plastid. Its subcellular location is the chloroplast. The enzyme catalyses chlorophyllide a + oxidized 2[4Fe-4S]-[ferredoxin] + 2 ADP + 2 phosphate = protochlorophyllide a + reduced 2[4Fe-4S]-[ferredoxin] + 2 ATP + 2 H2O. It functions in the pathway porphyrin-containing compound metabolism; chlorophyll biosynthesis (light-independent). Component of the dark-operative protochlorophyllide reductase (DPOR) that uses Mg-ATP and reduced ferredoxin to reduce ring D of protochlorophyllide (Pchlide) to form chlorophyllide a (Chlide). This reaction is light-independent. The NB-protein (ChlN-ChlB) is the catalytic component of the complex. This Huperzia lucidula (Shining clubmoss) protein is Light-independent protochlorophyllide reductase subunit B.